The chain runs to 241 residues: UDP-2,3-diacylglucosamine hydrolase (241 aa).

Mn(2+) is bound by residues Asp-9, His-11, Asp-42, Asn-79, and His-114. 79–80 (NR) provides a ligand contact to substrate. Substrate-binding residues include Asp-122, Ser-160, Asn-164, Lys-167, and His-195. Positions 195 and 197 each coordinate Mn(2+).

This sequence belongs to the LpxH family. Mn(2+) serves as cofactor.

Its subcellular location is the cell inner membrane. The catalysed reaction is UDP-2-N,3-O-bis[(3R)-3-hydroxytetradecanoyl]-alpha-D-glucosamine + H2O = 2-N,3-O-bis[(3R)-3-hydroxytetradecanoyl]-alpha-D-glucosaminyl 1-phosphate + UMP + 2 H(+). Its pathway is glycolipid biosynthesis; lipid IV(A) biosynthesis; lipid IV(A) from (3R)-3-hydroxytetradecanoyl-[acyl-carrier-protein] and UDP-N-acetyl-alpha-D-glucosamine: step 4/6. In terms of biological role, hydrolyzes the pyrophosphate bond of UDP-2,3-diacylglucosamine to yield 2,3-diacylglucosamine 1-phosphate (lipid X) and UMP by catalyzing the attack of water at the alpha-P atom. Involved in the biosynthesis of lipid A, a phosphorylated glycolipid that anchors the lipopolysaccharide to the outer membrane of the cell. This chain is UDP-2,3-diacylglucosamine hydrolase, found in Shewanella frigidimarina (strain NCIMB 400).